Reading from the N-terminus, the 2350-residue chain is Probable JmjC domain-containing histone demethylation protein 2C (2350 aa).

Disordered regions lie at residues 96–302 and 314–336; these read TRAQ…LQEC and PKDR…NDTH. Residues 98-127 are compositionally biased toward polar residues; the sequence is AQANSPRPAMNSQAAVPKQNTHQQQQQRSI. Phosphoserine occurs at positions 135 and 138. Positions 141–160 are enriched in basic and acidic residues; the sequence is DEEKMKEDKYDCVSRGENPK. A compositionally biased stretch (basic residues) spans 161 to 171; the sequence is GKNKHVVTKRR. The span at 172 to 189 shows a compositional bias: basic and acidic residues; it reads KPEEAEKRLSMKRLRTDN. Low complexity predominate over residues 190-200; the sequence is ASDASESSDAE. A phosphoserine mark is found at serine 191 and serine 194. The segment covering 257–280 has biased composition (basic and acidic residues); sequence QEDKNHNEGEKPKSTDSHLQDKMT. The span at 281-302 shows a compositional bias: polar residues; it reads LRSSEQATVADHNSNDSVLQEC. A phosphoserine mark is found at serine 294 and serine 320. The residue at position 324 (threonine 324) is a Phosphothreonine. Phosphoserine is present on residues serine 420, serine 436, serine 457, serine 458, serine 460, serine 471, and serine 762. 5 disordered regions span residues 426 to 486, 747 to 766, 859 to 883, 1030 to 1083, and 1422 to 1508; these read SVTE…NSQA, SSAE…PPLT, RENY…DKDV, RKES…DQSL, and EKVS…VPRS. Low complexity-rich tracts occupy residues 863–874 and 1034–1045; these read SRVVPSSSSPKS and SYSSLSPPTLTP. The span at 1071–1083 shows a compositional bias: polar residues; it reads SQSNFKNSSDQSL. Residues 1454–1463 are compositionally biased toward basic residues; the sequence is KRQPKPTYKK. Over residues 1464 to 1480 the composition is skewed to basic and acidic residues; that stretch reads KQNDLQKRKGEVEEDSK. The segment at 1657 to 1682 adopts a C6-type zinc-finger fold; it reads CDACEATLFNVHWVCRKCGFVACLDC. Residues 1776 to 1818 are compositionally biased toward polar residues; it reads KTSVSLPESQQQNSPQKSQTNGNSSPGSASTDSRLTPPESQSP. The interval 1776-1874 is disordered; sequence KTSVSLPESQ…PASQSNEQGS (99 aa). Serine 1800 is subject to Phosphoserine. Residues 1826–1849 are compositionally biased toward basic and acidic residues; it reads AEQKSREEKQENKEFTLEREIKED. Polar residues predominate over residues 1855–1874; the sequence is SDSPNGSTSPPASQSNEQGS. An LXXLL motif motif is present at residues 1876-1880; it reads LRDLL. Residues 1933 to 1962 form a disordered region; sequence PNKTSKINIKSEPNEEPKESSLPATDESNK. Residue lysine 1942 forms a Glycyl lysine isopeptide (Lys-Gly) (interchain with G-Cter in SUMO2) linkage. Residues 2084–2308 enclose the JmjC domain; it reads MPTRYEDFLR…QSFHLTQELR (225 aa). Residues histidine 2146, glutamate 2148, and histidine 2276 each coordinate Fe cation.

This sequence belongs to the JHDM2 histone demethylase family. Requires Fe(2+) as cofactor.

It is found in the nucleus. Functionally, probable histone demethylase that specifically demethylates 'Lys-9' of histone H3, thereby playing a central role in histone code. Demethylation of Lys residue generates formaldehyde and succinate. May be involved in hormone-dependent transcriptional activation, by participating in recruitment to androgen-receptor target genes. The polypeptide is Probable JmjC domain-containing histone demethylation protein 2C (Jmjd1c) (Mus musculus (Mouse)).